Here is a 424-residue protein sequence, read N- to C-terminus: Glucan endo-1,3-alpha-glucosidase agn1 (424 aa).

The signal sequence occupies residues 1 to 20 (MKLVLFLVLLFSALINLTNA).

This sequence belongs to the glycosyl hydrolase 71 family. As to quaternary structure, monomer. Not glycosylated.

The protein resides in the secreted. Its subcellular location is the cell wall. The catalysed reaction is Endohydrolysis of (1-&gt;3)-alpha-D-glucosidic linkages in isolichenin, pseudonigeran and nigeran.. Its function is as follows. Has a role in cell separation where it is required for the degradation of the cell wall material surrounding the septum (the septum edging) which must be hydrolyzed before full separation of the daughter cells can occur. Hydrolyzes 1,3-alpha-glucan predominantly into pentasaccharides. This chain is Glucan endo-1,3-alpha-glucosidase agn1 (agn1), found in Schizosaccharomyces pombe (strain 972 / ATCC 24843) (Fission yeast).